A 194-amino-acid polypeptide reads, in one-letter code: Fe/S biogenesis protein NfuA (194 aa).

Residues Cys151 and Cys154 each contribute to the [4Fe-4S] cluster site.

The protein belongs to the NfuA family. As to quaternary structure, homodimer. The cofactor is [4Fe-4S] cluster.

Involved in iron-sulfur cluster biogenesis. Binds a 4Fe-4S cluster, can transfer this cluster to apoproteins, and thereby intervenes in the maturation of Fe/S proteins. Could also act as a scaffold/chaperone for damaged Fe/S proteins. This Aliivibrio fischeri (strain ATCC 700601 / ES114) (Vibrio fischeri) protein is Fe/S biogenesis protein NfuA.